Reading from the N-terminus, the 173-residue chain is MPRTQRNDNFIDKTFTVMADIILKVVPFNKKAKEAFVYYRDGMSAQADGEYKEALDNYYEALKLEDDANDRSYILYNIGIIHGSNGEHERALEYYHEAIELNPNLPSALNNIAVIYHYQGERAKEEGREDESEALFDKAAEYWKQAIRLAPNNYIEAQNWLKVTGRSEMDVFF.

3 TPR repeats span residues 35-68, 72-105, and 120-153; these read AFVYYRDGMSAQADGEYKEALDNYYEALKLEDDA, SYILYNIGIIHGSNGEHERALEYYHEAIELNPNL, and GERAKEEGREDESEALFDKAAEYWKQAIRLAPNN.

Belongs to the Ycf3 family.

It is found in the cellular thylakoid membrane. In terms of biological role, essential for the assembly of the photosystem I (PSI) complex. May act as a chaperone-like factor to guide the assembly of the PSI subunits. The protein is Photosystem I assembly protein Ycf3 of Gloeothece citriformis (strain PCC 7424) (Cyanothece sp. (strain PCC 7424)).